The primary structure comprises 401 residues: Argininosuccinate synthase (401 aa).

9–17 (AYSGGLDTS) contributes to the ATP binding site. Tyr86 is an L-citrulline binding site. Position 116 (Gly116) interacts with ATP. The L-aspartate site is built by Thr118, Asn122, and Asp123. An L-citrulline-binding site is contributed by Asn122. L-citrulline is bound by residues Arg126, Ser174, Ser183, Glu259, and Tyr271.

The protein belongs to the argininosuccinate synthase family. Type 1 subfamily. Homotetramer.

The protein resides in the cytoplasm. It catalyses the reaction L-citrulline + L-aspartate + ATP = 2-(N(omega)-L-arginino)succinate + AMP + diphosphate + H(+). It participates in amino-acid biosynthesis; L-arginine biosynthesis; L-arginine from L-ornithine and carbamoyl phosphate: step 2/3. The chain is Argininosuccinate synthase from Bacillus cereus (strain B4264).